A 431-amino-acid polypeptide reads, in one-letter code: tRNA(Ile)-lysidine synthase (431 aa).

25-30 (SGGLDS) serves as a coordination point for ATP.

The protein belongs to the tRNA(Ile)-lysidine synthase family.

The protein resides in the cytoplasm. It carries out the reaction cytidine(34) in tRNA(Ile2) + L-lysine + ATP = lysidine(34) in tRNA(Ile2) + AMP + diphosphate + H(+). Ligates lysine onto the cytidine present at position 34 of the AUA codon-specific tRNA(Ile) that contains the anticodon CAU, in an ATP-dependent manner. Cytidine is converted to lysidine, thus changing the amino acid specificity of the tRNA from methionine to isoleucine. This is tRNA(Ile)-lysidine synthase from Legionella pneumophila (strain Lens).